Here is a 485-residue protein sequence, read N- to C-terminus: GTPase Der (485 aa).

EngA-type G domains are found at residues Pro-3 to Glu-167 and Pro-176 to Met-349. GTP-binding positions include Gly-9–Ser-16, Asp-56–Phe-60, Asn-119–Glu-122, Gly-182–Ser-189, Asp-229–Val-233, and Asn-294–Asp-297. A KH-like domain is found at Ile-350–Glu-434. Positions Asn-435 to Lys-485 are disordered. A compositionally biased stretch (basic and acidic residues) spans Arg-457–Asn-469. Basic residues predominate over residues Arg-470–Lys-485.

The protein belongs to the TRAFAC class TrmE-Era-EngA-EngB-Septin-like GTPase superfamily. EngA (Der) GTPase family. Associates with the 50S ribosomal subunit.

GTPase that plays an essential role in the late steps of ribosome biogenesis. This chain is GTPase Der, found in Neisseria meningitidis serogroup A / serotype 4A (strain DSM 15465 / Z2491).